The primary structure comprises 416 residues: Serine hydroxymethyltransferase (416 aa).

(6S)-5,6,7,8-tetrahydrofolate-binding positions include Leu118 and Gly122–Leu124. An N6-(pyridoxal phosphate)lysine modification is found at Lys227. (6S)-5,6,7,8-tetrahydrofolate-binding positions include Glu242 and Ser350–Phe352.

Belongs to the SHMT family. Homodimer. Pyridoxal 5'-phosphate serves as cofactor.

It is found in the cytoplasm. The catalysed reaction is (6R)-5,10-methylene-5,6,7,8-tetrahydrofolate + glycine + H2O = (6S)-5,6,7,8-tetrahydrofolate + L-serine. The protein operates within one-carbon metabolism; tetrahydrofolate interconversion. It participates in amino-acid biosynthesis; glycine biosynthesis; glycine from L-serine: step 1/1. Functionally, catalyzes the reversible interconversion of serine and glycine with tetrahydrofolate (THF) serving as the one-carbon carrier. This reaction serves as the major source of one-carbon groups required for the biosynthesis of purines, thymidylate, methionine, and other important biomolecules. Also exhibits THF-independent aldolase activity toward beta-hydroxyamino acids, producing glycine and aldehydes, via a retro-aldol mechanism. The chain is Serine hydroxymethyltransferase from Syntrophotalea carbinolica (strain DSM 2380 / NBRC 103641 / GraBd1) (Pelobacter carbinolicus).